The sequence spans 218 residues: Capsid protein (218 aa).

An N-acetylmethionine; by host modification is found at Met-1. Positions 1–10 (MDKSESASAG) are enriched in low complexity. Positions 1 to 30 (MDKSESASAGRNRRRRPRRGSRSASSSSDA) are disordered. Residues 11-21 (RNRRRRPRRGS) are compositionally biased toward basic residues.

Belongs to the cucumovirus capsid protein family.

The protein resides in the virion. Its function is as follows. Capsid protein. Probably binds RNA and plays a role in packaging. The polypeptide is Capsid protein (Cucumis sativus (Cucumber)).